Reading from the N-terminus, the 433-residue chain is sn-glycerol-3-phosphate-binding periplasmic protein UgpB (433 aa).

Positions 1 to 25 are cleaved as a signal peptide; that stretch reads MFTRLITTSALTGAIALTIGSQAFA. Tyr-67, Asp-91, Ser-146, Ser-273, Gly-307, Tyr-346, and Arg-397 together coordinate sn-glycerol 3-phosphate.

Belongs to the bacterial solute-binding protein 1 family. In terms of assembly, the complex is composed of two ATP-binding proteins (UgpC), two transmembrane proteins (UgpA and UgpE) and a solute-binding protein (UgpB).

Its subcellular location is the periplasm. Its function is as follows. Part of the ABC transporter complex UgpBAEC involved in sn-glycerol-3-phosphate (G3P) import. Binds G3P. In Brucella suis biovar 1 (strain 1330), this protein is sn-glycerol-3-phosphate-binding periplasmic protein UgpB (ugpB).